The sequence spans 1083 residues: Carbamoyl phosphate synthase large chain (1083 aa).

A carboxyphosphate synthetic domain region spans residues 1-402 (MPRRDDIKKI…SFQKALRGLE (402 aa)). ATP is bound by residues Arg129, Arg169, Gly175, Gly176, Glu208, Ile210, Glu215, Gly241, Val242, His243, Gln285, and Glu299. An ATP-grasp 1 domain is found at 133–328 (KQAMDKIGLD…IAKIAAKLAV (196 aa)). Residues Gln285, Glu299, and Asn301 each coordinate Mg(2+). Residues Gln285, Glu299, and Asn301 each coordinate Mn(2+). The segment at 403-557 (VGAFGFGSDP…YSTYESETEV (155 aa)) is oligomerization domain. The tract at residues 558–944 (PAKGDKKRVV…AFAKSQLAAG (387 aa)) is carbamoyl phosphate synthetic domain. An ATP-grasp 2 domain is found at 683–878 (SSLIDELGLR…VANLATKVMA (196 aa)). Arg719, Arg758, Leu760, Glu765, Gly790, Val791, His792, Ser793, Gln833, and Glu849 together coordinate ATP. Gln833, Glu849, and Asn851 together coordinate Mg(2+). Positions 833, 849, and 851 each coordinate Mn(2+). The region spanning 945–1083 (TVLPESGKIF…SLQRRYAQNV (139 aa)) is the MGS-like domain. The interval 945 to 1083 (TVLPESGKIF…SLQRRYAQNV (139 aa)) is allosteric domain.

It belongs to the CarB family. As to quaternary structure, composed of two chains; the small (or glutamine) chain promotes the hydrolysis of glutamine to ammonia, which is used by the large (or ammonia) chain to synthesize carbamoyl phosphate. Tetramer of heterodimers (alpha,beta)4. The cofactor is Mg(2+). It depends on Mn(2+) as a cofactor.

The enzyme catalyses hydrogencarbonate + L-glutamine + 2 ATP + H2O = carbamoyl phosphate + L-glutamate + 2 ADP + phosphate + 2 H(+). It catalyses the reaction hydrogencarbonate + NH4(+) + 2 ATP = carbamoyl phosphate + 2 ADP + phosphate + 2 H(+). It participates in amino-acid biosynthesis; L-arginine biosynthesis; carbamoyl phosphate from bicarbonate: step 1/1. It functions in the pathway pyrimidine metabolism; UMP biosynthesis via de novo pathway; (S)-dihydroorotate from bicarbonate: step 1/3. In terms of biological role, large subunit of the glutamine-dependent carbamoyl phosphate synthetase (CPSase). CPSase catalyzes the formation of carbamoyl phosphate from the ammonia moiety of glutamine, carbonate, and phosphate donated by ATP, constituting the first step of 2 biosynthetic pathways, one leading to arginine and/or urea and the other to pyrimidine nucleotides. The large subunit (synthetase) binds the substrates ammonia (free or transferred from glutamine from the small subunit), hydrogencarbonate and ATP and carries out an ATP-coupled ligase reaction, activating hydrogencarbonate by forming carboxy phosphate which reacts with ammonia to form carbamoyl phosphate. This is Carbamoyl phosphate synthase large chain from Rhodopirellula baltica (strain DSM 10527 / NCIMB 13988 / SH1).